Reading from the N-terminus, the 156-residue chain is Ribosomal RNA large subunit methyltransferase H (156 aa).

S-adenosyl-L-methionine is bound by residues Leu73, Gly104, and 123 to 128; that span reads ISSMTL.

The protein belongs to the RNA methyltransferase RlmH family. In terms of assembly, homodimer.

It is found in the cytoplasm. The catalysed reaction is pseudouridine(1915) in 23S rRNA + S-adenosyl-L-methionine = N(3)-methylpseudouridine(1915) in 23S rRNA + S-adenosyl-L-homocysteine + H(+). In terms of biological role, specifically methylates the pseudouridine at position 1915 (m3Psi1915) in 23S rRNA. The polypeptide is Ribosomal RNA large subunit methyltransferase H (Burkholderia ambifaria (strain MC40-6)).